Reading from the N-terminus, the 637-residue chain is Poly(U)-binding-splicing factor hfp (637 aa).

Composition is skewed to basic and acidic residues over residues 1–20 and 28–37; these read MGSN…REIS and TRSDSGKSTD. Positions 1 to 41 are disordered; sequence MGSNDRASRSPRSDDQREISDMPATKRTRSDSGKSTDSKIP. Phosphoserine occurs at positions 13 and 30. 2 consecutive RRM domains span residues 130–208 and 227–305; these read CRVY…RPSN and NRIY…RSIT. Residues 537-627 form the RRM 3; atypical domain; it reads RVIILRNMVG…RRVVAELYDQ (91 aa).

The protein belongs to the RRM half pint family. In terms of assembly, interacts with enc. However, given the cytoplasmic localization of enc, the relevance of such interaction is unclear. In terms of tissue distribution, expressed in all germline cells and within the follicle cell.

The protein resides in the nucleus. Functionally, splicing factor that regulates oogenesis and controls both mitosis and mRNA localization in the germline by regulating mRNA splicing of a subset of genes within the ovary. Probably acts by regulating the alternative splice site selection of the otu transcript. Also regulates the alternative splicing of eIF4E1 and grk, while it is not involved in the splicing of par-1, sqd or psq. Involved in the alternative splicing of the bicistronic pre-mRNA encoding Kdm3 and CG8176; required for the efficient production of mRNA encoding Kdm3 and Kdm3-mediated regulation of rhino-dependent piRNA production. In Drosophila melanogaster (Fruit fly), this protein is Poly(U)-binding-splicing factor hfp.